Reading from the N-terminus, the 1062-residue chain is Inversin (1062 aa).

ANK repeat units lie at residues 13–42 (SLAS…ALRD), 47–76 (FGRT…DVNK), 80–110 (SRRT…WMQK), 113–144 (EEMT…EVDT), 148–177 (NKQT…NIGI), 181–213 (EGKI…TESL), 220–250 (EGRT…NITS), 254–283 (LFRT…SGTI), 288–317 (QGAT…VKDD), 321–350 (EGRT…DIDI), 356–385 (YGGT…QVDA), 389–418 (MKHT…RVDL), 422–451 (DGHS…NPNV), 455–484 (AGRT…DPNI), 488–517 (EGRT…FPNQ), and 523–553 (ERYT…SIAA). Asn-75 bears the 3-hydroxyasparagine mark. Residues 490–498 (RTALHWSCN) carry the D-box 1 motif. The IQ 1 domain occupies 555 to 584 (QDIAAFKIQAVYKGYKVRKAFRDRKNLLMK). A compositionally biased stretch (basic and acidic residues) spans 589–608 (RKDAAAKKREEENKRKEAEQ). The segment at 589–849 (RKDAAAKKRE…QDKLIGGVSS (261 aa)) is disordered. Composition is skewed to polar residues over residues 636 to 658 (QNEG…TVQS) and 676 to 689 (QGDS…TASR). Positions 690–700 (KPSETPIEHCR) are enriched in basic and acidic residues. Over residues 713–724 (GGNSSKNQGTSS) the composition is skewed to polar residues. Basic and acidic residues-rich tracts occupy residues 725–741 (VEKR…RCEE) and 775–788 (DHPR…DRAA). The D-box 2 motif lies at 907–915 (RKELFRRKN). One can recognise an IQ 2 domain in the interval 914 to 943 (KNKAAAVIQRAWRSYQLRKHLSRLLHLKQL). The segment at 1042 to 1062 (RSKKFSYNLQPSSQSKNKPKL) is disordered. A compositionally biased stretch (polar residues) spans 1046 to 1062 (FSYNLQPSSQSKNKPKL).

In terms of assembly, interacts with microtubules. Interacts with NPHP1. Interacts with DVL1, PRICKLE (PRICKLE1 or PRICKLE2) and Strabismus (VANGL1 or VANGL2). Binds calmodulin via its IQ domains. Interacts with APC2. Interacts with alpha-, beta-, and gamma-catenin. Interacts with N-cadherin (CDH2). Interacts with NPHP3. Interacts with IQCB1; the interaction likely requires additional interactors. Component of a complex containing at least ANKS6, INVS, NEK8 and NPHP3. ANKS6 may organize complex assembly by linking INVS and NPHP3 to NEK8 and INVS may target the complex to the proximal ciliary axoneme. In terms of processing, may be ubiquitinated via its interaction with APC2. Hydroxylated at Asn-75, most probably by HIF1AN. In terms of tissue distribution, strongly expressed in the primary cilia of renal cells, especially in the varicosities, swellings observed in the cilia. Localizes in the node monocilia and in other 9+0 monocilia, including those of kidney epithelial cells and the pituitary gland, but it does not localize to 9+2 cilia (at protein level). In adult, it is expressed at high level in liver and kidney. Weakly or not expressed in other tissues.

It is found in the cytoplasm. The protein localises to the cytoskeleton. Its subcellular location is the membrane. The protein resides in the nucleus. It localises to the perinuclear region. It is found in the spindle. Its function is as follows. Required for normal renal development and establishment of left-right axis. Probably acts as a molecular switch between different Wnt signaling pathways. Inhibits the canonical Wnt pathway by targeting cytoplasmic disheveled (DVL1) for degradation by the ubiquitin-proteasome. This suggests that it is required in renal development to oppose the repression of terminal differentiation of tubular epithelial cells by Wnt signaling. Involved in the organization of apical junctions in kidney cells together with NPHP1, NPHP4 and RPGRIP1L/NPHP8. Does not seem to be strictly required for ciliogenesis. The protein is Inversin (Invs) of Mus musculus (Mouse).